Consider the following 158-residue polypeptide: 2-C-methyl-D-erythritol 2,4-cyclodiphosphate synthase (158 aa).

D9 and H11 together coordinate a divalent metal cation. 4-CDP-2-C-methyl-D-erythritol 2-phosphate is bound by residues 9–11 (DVH) and 35–36 (HS). H43 provides a ligand contact to a divalent metal cation. 4-CDP-2-C-methyl-D-erythritol 2-phosphate contacts are provided by residues 57-59 (DIG), 62-66 (FPDTD), 101-107 (AQAPKMA), 133-136 (TTTE), F140, and R143.

This sequence belongs to the IspF family. Homotrimer. It depends on a divalent metal cation as a cofactor.

It catalyses the reaction 4-CDP-2-C-methyl-D-erythritol 2-phosphate = 2-C-methyl-D-erythritol 2,4-cyclic diphosphate + CMP. It participates in isoprenoid biosynthesis; isopentenyl diphosphate biosynthesis via DXP pathway; isopentenyl diphosphate from 1-deoxy-D-xylulose 5-phosphate: step 4/6. Functionally, involved in the biosynthesis of isopentenyl diphosphate (IPP) and dimethylallyl diphosphate (DMAPP), two major building blocks of isoprenoid compounds. Catalyzes the conversion of 4-diphosphocytidyl-2-C-methyl-D-erythritol 2-phosphate (CDP-ME2P) to 2-C-methyl-D-erythritol 2,4-cyclodiphosphate (ME-CPP) with a corresponding release of cytidine 5-monophosphate (CMP). This is 2-C-methyl-D-erythritol 2,4-cyclodiphosphate synthase from Vibrio cholerae serotype O1 (strain ATCC 39541 / Classical Ogawa 395 / O395).